We begin with the raw amino-acid sequence, 428 residues long: Pyruvate dehydrogenase E1 component subunit alpha-3, chloroplastic (428 aa).

A chloroplast-targeting transit peptide spans 1–61 (MATAFAPTKL…NATRRSPVVS (61 aa)). Pyruvate is bound by residues His-115, Tyr-141, Arg-142, Ala-190, Ile-192, Asp-227, Gly-228, and Asn-256. Thiamine diphosphate contacts are provided by Tyr-141, Arg-142, Ala-190, Ile-192, Asp-227, Gly-228, Asn-256, and His-325. Asp-227 is a Mg(2+) binding site. Asn-256 serves as a coordination point for Mg(2+).

Tetramer of 2 alpha and 2 beta subunits. The cofactor is thiamine diphosphate. Requires Mg(2+) as cofactor.

Its subcellular location is the plastid. The protein resides in the chloroplast. The catalysed reaction is N(6)-[(R)-lipoyl]-L-lysyl-[protein] + pyruvate + H(+) = N(6)-[(R)-S(8)-acetyldihydrolipoyl]-L-lysyl-[protein] + CO2. In terms of biological role, the pyruvate dehydrogenase complex catalyzes the overall conversion of pyruvate to acetyl-CoA and CO(2). It contains multiple copies of three enzymatic components: pyruvate dehydrogenase (E1), dihydrolipoamide acetyltransferase (E2) and lipoamide dehydrogenase (E3). The polypeptide is Pyruvate dehydrogenase E1 component subunit alpha-3, chloroplastic (PDH-E1 ALPHA) (Arabidopsis thaliana (Mouse-ear cress)).